The primary structure comprises 137 residues: Putative pre-16S rRNA nuclease (137 aa).

Belongs to the YqgF nuclease family.

Its subcellular location is the cytoplasm. Functionally, could be a nuclease involved in processing of the 5'-end of pre-16S rRNA. The polypeptide is Putative pre-16S rRNA nuclease (Bacillus cereus (strain 03BB102)).